Here is a 633-residue protein sequence, read N- to C-terminus: Chaperone protein HtpG (633 aa).

The a; substrate-binding stretch occupies residues 1–341; the sequence is MSATSSKETL…SADLPLNVSR (341 aa). Positions 342-558 are b; the sequence is EILQSSRDID…EGDMSANLER (217 aa). The c stretch occupies residues 559-633; the sequence is LLKAAGQAAP…LNGLLAMLPG (75 aa).

It belongs to the heat shock protein 90 family. Homodimer.

It is found in the cytoplasm. Molecular chaperone. Has ATPase activity. This chain is Chaperone protein HtpG, found in Thiobacillus denitrificans (strain ATCC 25259 / T1).